The sequence spans 671 residues: Beta-galactosidase 1 (671 aa).

A signal peptide spans 1–18; it reads MKLIVLIFFLLFINLNYC. Glu200 functions as the Proton donor in the catalytic mechanism. N-linked (GlcNAc...) asparagine glycosylation occurs at Asn228. The active-site Nucleophile is Glu288. 7 N-linked (GlcNAc...) asparagine glycosylation sites follow: Asn321, Asn391, Asn400, Asn499, Asn509, Asn564, and Asn595.

The protein belongs to the glycosyl hydrolase 35 family.

It is found in the lysosome. It carries out the reaction Hydrolysis of terminal non-reducing beta-D-galactose residues in beta-D-galactosides.. In terms of biological role, cleaves beta-linked terminal galactosyl residues from gangliosides, glycoproteins, and glycosaminoglycans. The protein is Beta-galactosidase 1 (glb1) of Dictyostelium discoideum (Social amoeba).